Reading from the N-terminus, the 337-residue chain is Mediator of RNA polymerase II transcription subunit 19 (337 aa).

Disordered regions lie at residues 1–38 (MMSNYGNMMDSPKSSPHGGGRSPVVARQDSSGTLKTTI), 155–234 (YVTP…LPGG), and 297–337 (QMSS…MSQF). Over residues 28-38 (QDSSGTLKTTI) the composition is skewed to polar residues. 2 stretches are compositionally biased toward basic residues: residues 159–171 (ARKHKNKHKKQKH) and 208–221 (RKKRKKEKKRKKKN). Residues 189–223 (LETYEKKHKKQKRHEDDKERKKRKKEKKRKKKNQS) adopt a coiled-coil conformation. The segment covering 297–309 (QMSSGGLLGSVLG) has biased composition (low complexity). The span at 310–330 (TSGGPGGGGGGGGGGGGGVGG) shows a compositional bias: gly residues.

The protein belongs to the Mediator complex subunit 19 family. As to quaternary structure, component of the Mediator complex.

It localises to the nucleus. Its function is as follows. Component of the Mediator complex, a coactivator involved in the regulated transcription of nearly all RNA polymerase II-dependent genes. Mediator functions as a bridge to convey information from gene-specific regulatory proteins to the basal RNA polymerase II transcription machinery. Mediator is recruited to promoters by direct interactions with regulatory proteins and serves as a scaffold for the assembly of a functional preinitiation complex with RNA polymerase II and the general transcription factors. In Drosophila melanogaster (Fruit fly), this protein is Mediator of RNA polymerase II transcription subunit 19 (MED19).